The primary structure comprises 130 residues: Small ribosomal subunit protein uS8 (130 aa).

Belongs to the universal ribosomal protein uS8 family. Part of the 30S ribosomal subunit. Contacts proteins S5 and S12.

Functionally, one of the primary rRNA binding proteins, it binds directly to 16S rRNA central domain where it helps coordinate assembly of the platform of the 30S subunit. This Aster yellows witches'-broom phytoplasma (strain AYWB) protein is Small ribosomal subunit protein uS8.